The primary structure comprises 300 residues: Cation-efflux pump FieF (300 aa).

4 helical membrane passes run 12–32 (AALA…VAWY), 40–60 (LAAL…LLVV), 82–102 (AALA…LTGF), and 114–134 (PGVG…LVTY). Zn(2+)-binding residues include Asp45 and Asp49. Zn(2+) is bound by residues His153 and Asp157. 2 consecutive transmembrane segments (helical) span residues 155 to 175 (QSDV…WYGF) and 178 to 198 (ADAL…LRMG).

The protein belongs to the cation diffusion facilitator (CDF) transporter (TC 2.A.4) family. FieF subfamily. As to quaternary structure, homodimer.

The protein resides in the cell inner membrane. The catalysed reaction is Zn(2+)(in) + H(+)(out) = Zn(2+)(out) + H(+)(in). It catalyses the reaction Cd(2+)(in) + H(+)(out) = Cd(2+)(out) + H(+)(in). It carries out the reaction Fe(2+)(in) + H(+)(out) = Fe(2+)(out) + H(+)(in). Functionally, divalent metal cation transporter which exports Zn(2+), Cd(2+) and possibly Fe(2+). May be involved in zinc and iron detoxification by efflux. In Serratia proteamaculans (strain 568), this protein is Cation-efflux pump FieF.